Here is a 563-residue protein sequence, read N- to C-terminus: Dicarboxylate transporter 2.1, chloroplastic (563 aa).

The transit peptide at 1–68 (MESFALHSLS…LKPIPRFSTR (68 aa)) directs the protein to the chloroplast. Disordered regions lie at residues 16-45 (TLLS…STIS) and 71-92 (AAPQ…PSPQ). The span at 28 to 45 (RLSLLRRTSSRSPPSTIS) shows a compositional bias: low complexity. Positions 76–90 (NAPPPPPPSPSPSPS) are enriched in pro residues. 12 helical membrane-spanning segments follow: residues 96–116 (LIPL…VPVP), 134–154 (IAGL…GLTA), 165–185 (AAFS…FFFA), 234–254 (AGGI…SKPN), 261–281 (LGSY…ALFL), 308–328 (WFKA…LILY), 358–378 (NEWI…CGET), 379–399 (LGIP…VLGV), 414–434 (TLAW…LGVV), 450–470 (LSWP…HYLF), 483–503 (AFLA…LALA), and 537–557 (IGFV…TFWW).

The protein belongs to the SLC13A/DASS transporter (TC 2.A.47) family. DIT1 subfamily. As to expression, expressed in roots, rosette and cauline leaves, stems, flowers and siliques.

It is found in the plastid. It localises to the chloroplast inner membrane. Its function is as follows. Glutamate/malate translocator involved with DIT1 in primary ammonia assimilation and in the re-assimilation of ammonia generated by the photorespiratory pathway. Exports the end product of ammonia assimilation, glutamate, from plastids to the cytosol. The precursor for ammonia assimilation, 2-oxoglutarate, is imported from the cytosol by DIT1. The protein is Dicarboxylate transporter 2.1, chloroplastic (DIT2-1) of Arabidopsis thaliana (Mouse-ear cress).